The primary structure comprises 381 residues: Queuine tRNA-ribosyltransferase (381 aa).

Asp-96 serves as the catalytic Proton acceptor. Substrate contacts are provided by residues 96 to 100, Asp-150, Gln-193, and Gly-220; that span reads DSGGF. The interval 251–257 is RNA binding; it reads GVGSPDA. Asp-270 acts as the Nucleophile in catalysis. The RNA binding; important for wobble base 34 recognition stretch occupies residues 275–279; sequence TRIAR. Cys-308, Cys-310, Cys-313, and His-339 together coordinate Zn(2+).

This sequence belongs to the queuine tRNA-ribosyltransferase family. Homodimer. Within each dimer, one monomer is responsible for RNA recognition and catalysis, while the other monomer binds to the replacement base PreQ1. Requires Zn(2+) as cofactor.

It catalyses the reaction 7-aminomethyl-7-carbaguanine + guanosine(34) in tRNA = 7-aminomethyl-7-carbaguanosine(34) in tRNA + guanine. It functions in the pathway tRNA modification; tRNA-queuosine biosynthesis. Its function is as follows. Catalyzes the base-exchange of a guanine (G) residue with the queuine precursor 7-aminomethyl-7-deazaguanine (PreQ1) at position 34 (anticodon wobble position) in tRNAs with GU(N) anticodons (tRNA-Asp, -Asn, -His and -Tyr). Catalysis occurs through a double-displacement mechanism. The nucleophile active site attacks the C1' of nucleotide 34 to detach the guanine base from the RNA, forming a covalent enzyme-RNA intermediate. The proton acceptor active site deprotonates the incoming PreQ1, allowing a nucleophilic attack on the C1' of the ribose to form the product. After dissociation, two additional enzymatic reactions on the tRNA convert PreQ1 to queuine (Q), resulting in the hypermodified nucleoside queuosine (7-(((4,5-cis-dihydroxy-2-cyclopenten-1-yl)amino)methyl)-7-deazaguanosine). This is Queuine tRNA-ribosyltransferase from Bacillus velezensis (strain DSM 23117 / BGSC 10A6 / LMG 26770 / FZB42) (Bacillus amyloliquefaciens subsp. plantarum).